The chain runs to 220 residues: MEVGCVYIITTQLYEPLDIYKIGCTKDINRRLKTMNASRISFDKFFIVNQIQTFHYFKLEQGLHKLLKKYRLNNEFFQCNVNIIEKAISDYANNNVFMLHDDKIAHVAIEKKLKWFQKNNLFSITDTNLEIFLNESSLINEIKQWLSVFDKHNLYKFLHPSHFYNIVSYLKTVCIQNDDEEEFLINEMNMLSINTKDDNSKDDNNDSEDLSKQIDNLKLD.

The disordered stretch occupies residues lysine 196–aspartate 220.

This is an uncharacterized protein from Invertebrate iridescent virus 6 (IIV-6).